The chain runs to 140 residues: Large-conductance mechanosensitive channel (140 aa).

2 helical membrane-spanning segments follow: residues 14–34 and 85–105; these read VMDLAVGVIIGGAFATITGSL and GAFVTAVINFLILAFIIFLLV.

It belongs to the MscL family. In terms of assembly, homopentamer.

The protein resides in the cell inner membrane. Channel that opens in response to stretch forces in the membrane lipid bilayer. May participate in the regulation of osmotic pressure changes within the cell. The protein is Large-conductance mechanosensitive channel of Sphingopyxis alaskensis (strain DSM 13593 / LMG 18877 / RB2256) (Sphingomonas alaskensis).